Reading from the N-terminus, the 139-residue chain is GATA transcription factor 16 (139 aa).

The GATA-type zinc finger occupies 32–86; sequence NDKKKTCADCGTSKTPLWRGGPVGPKSLCNACGIRNRKKRRGGTEDNKKLKKSSS. A disordered region spans residues 67–98; that stretch reads NRKKRRGGTEDNKKLKKSSSGGGNRKFGESLK.

It belongs to the type IV zinc-finger family. Class B subfamily.

The protein resides in the nucleus. In terms of biological role, transcriptional regulator that specifically binds 5'-GATA-3' or 5'-GAT-3' motifs within gene promoters. This is GATA transcription factor 16 (GATA16) from Arabidopsis thaliana (Mouse-ear cress).